Here is a 529-residue protein sequence, read N- to C-terminus: Delayed-rectifier potassium channel regulatory subunit KCNS1 (529 aa).

Topologically, residues 1–217 (MLMLLVRGTH…LTMENPGYSL (217 aa)) are cytoplasmic. A helical transmembrane segment spans residues 218–239 (PSKLFSCVSISVVLASIAAMCI). Residues 240–270 (HSLPEYQAREAAAAVAAVAAGRSPEGVRDDP) lie on the Extracellular side of the membrane. A helical transmembrane segment spans residues 271 to 293 (VLRRLEYFCIAWFSFEVSSRLLL). At 294–304 (APSTRNFFCHP) the chain is on the cytoplasmic side. The chain crosses the membrane as a helical span at residues 305–322 (LNLIDIVSVLPFYLTLLA). Residues 323-340 (GVALGDQGGTGGKELGHL) lie on the Extracellular side of the membrane. Residues 341–361 (GKVVQVFRLMRIFRVLKLARH) form a helical; Voltage-sensor membrane-spanning segment. Topologically, residues 362 to 376 (STGLRSLGATLKHSY) are cytoplasmic. Residues 377-398 (REVGILLLYLAVGVSVFSGVAY) form a helical membrane-spanning segment. Residues 399 to 411 (TAEKEEDVGFNTI) are Extracellular-facing. Residues 412 to 423 (PACWWWGTVSMT) constitute an intramembrane region (helical). Residues 424-429 (TVGYGD) carry the Selectivity filter motif. An intramembrane segment occupies 424–431 (TVGYGDVV). The Extracellular portion of the chain corresponds to 432–438 (PVTVAGK). The helical transmembrane segment at 439 to 467 (LAASGCILGGILVVALPITIIFNKFSHFY) threads the bilayer. Residues 468-529 (RRQKALEAAV…PSEPPHPQMY (62 aa)) lie on the Cytoplasmic side of the membrane. The segment at 494–529 (GVSEASLETSRETSQEGRSADLETQAPSEPPHPQMY) is disordered. A compositionally biased stretch (basic and acidic residues) spans 502–514 (TSRETSQEGRSAD).

Belongs to the potassium channel family. S (TC 1.A.1.2) subfamily. Kv9.1/KCNS1 sub-subfamily. In terms of assembly, heterotetramer with KCNB1. Heterotetramer with KCNB2. Does not form homomultimers.

It is found in the cell membrane. Potassium channel regulatory subunit that modulate the delayed rectifier voltage-gated potassium channel activity of KCNB1 and KCNB2 by altering their kinetics, expression levels, and shifting the half-inactivation potential to more polarized values. While it does not form functional channels on its own, it can form functional heterotetrameric channels with KCNB1 and KCNB2. Each regulatory subunit has unique regulatory properties that can lead to extensive inhibition, significant changes in kinetics, and/or substantial shifts in the voltage dependencies of the inactivation process. This is Delayed-rectifier potassium channel regulatory subunit KCNS1 from Macaca mulatta (Rhesus macaque).